A 572-amino-acid chain; its full sequence is Formate--tetrahydrofolate ligase (572 aa).

Residue 65 to 72 (TPLGEGKT) participates in ATP binding.

This sequence belongs to the formate--tetrahydrofolate ligase family.

It carries out the reaction (6S)-5,6,7,8-tetrahydrofolate + formate + ATP = (6R)-10-formyltetrahydrofolate + ADP + phosphate. It participates in one-carbon metabolism; tetrahydrofolate interconversion. This Chloroflexus aurantiacus (strain ATCC 29366 / DSM 635 / J-10-fl) protein is Formate--tetrahydrofolate ligase.